The primary structure comprises 383 residues: MNTNKNILILTANYGNGHVQVAKTLYQECERLGFKNVTVSNLYQESNPIVSEITQYLYLKSFSIGKQFYRLFYYGVDKIYNKRKFNIYFKMGNKRLDQLVKKHQPDIIINTFPMIVVPEYRRRMGKVIPTFNVMTDFCLHKIWVHEHIDKYYVATDYVKEKLLEIGTHPSNVKITGIPIRRQFEEEMDKDKIYEKYQLSPDKKILLIMAGAHGVLKNVKELCESLVTKEDVQVVVVCGKNTMLKSSLEDIEALYPNKLRTLGYIERIDELFRVADCMITKPGGITLTEATAIGVPVILYKPVPGQEKENALFFEDRGAAIVVNRHEEILESVSSLLADEKKLNEMKKNIKSLHLSNSSEVILTDIIEQSEIIMNKKQTVRALS.

The protein belongs to the glycosyltransferase 28 family. UgtP subfamily.

It is found in the cell membrane. The catalysed reaction is a 1,2-diacyl-3-O-(beta-D-glucopyranosyl)-sn-glycerol + UDP-alpha-D-glucose = a 1,2-diacyl-3-O-(beta-D-Glc-(1-&gt;6)-beta-D-Glc)-sn-glycerol + UDP + H(+). It catalyses the reaction a 1,2-diacyl-3-O-(beta-D-Glc-(1-&gt;6)-beta-D-Glc)-sn-glycerol + UDP-alpha-D-glucose = a 1,2-diacyl-3-O-(beta-D-Glc-(1-&gt;6)-beta-D-Glc-(1-&gt;6)-beta-D-Glc)-sn-glycerol + UDP + H(+). The enzyme catalyses a 1,2-diacyl-sn-glycerol + UDP-alpha-D-glucose = a 1,2-diacyl-3-O-(beta-D-glucopyranosyl)-sn-glycerol + UDP + H(+). It functions in the pathway glycolipid metabolism; diglucosyl-diacylglycerol biosynthesis. Functionally, processive glucosyltransferase involved in the biosynthesis of both the bilayer- and non-bilayer-forming membrane glucolipids. Is able to successively transfer up to three glucosyl residues to diacylglycerol (DAG), thereby catalyzing the formation of beta-monoglucosyl-DAG (3-O-(beta-D-glucopyranosyl)-1,2-diacyl-sn-glycerol), beta-diglucosyl-DAG (3-O-(beta-D-glucopyranosyl-beta-(1-&gt;6)-D-glucopyranosyl)-1,2-diacyl-sn-glycerol) and beta-triglucosyl-DAG (3-O-(beta-D-glucopyranosyl-beta-(1-&gt;6)-D-glucopyranosyl-beta-(1-&gt;6)-D-glucopyranosyl)-1,2-diacyl-sn-glycerol). Beta-diglucosyl-DAG is the predominant glycolipid found in Bacillales and is also used as a membrane anchor for lipoteichoic acid (LTA). The polypeptide is Processive diacylglycerol beta-glucosyltransferase (Bacillus licheniformis (strain ATCC 14580 / DSM 13 / JCM 2505 / CCUG 7422 / NBRC 12200 / NCIMB 9375 / NCTC 10341 / NRRL NRS-1264 / Gibson 46)).